The chain runs to 163 residues: Phosphopantetheine adenylyltransferase (163 aa).

Threonine 11 contributes to the substrate binding site. Residues 11-12 (TF) and histidine 19 each bind ATP. The substrate site is built by lysine 43, leucine 75, and arginine 89. ATP-binding positions include 90 to 92 (GLR), glutamate 100, and 125 to 131 (YSFISST).

This sequence belongs to the bacterial CoaD family. In terms of assembly, homohexamer. Mg(2+) is required as a cofactor.

It is found in the cytoplasm. The catalysed reaction is (R)-4'-phosphopantetheine + ATP + H(+) = 3'-dephospho-CoA + diphosphate. Its pathway is cofactor biosynthesis; coenzyme A biosynthesis; CoA from (R)-pantothenate: step 4/5. Reversibly transfers an adenylyl group from ATP to 4'-phosphopantetheine, yielding dephospho-CoA (dPCoA) and pyrophosphate. This Acinetobacter baylyi (strain ATCC 33305 / BD413 / ADP1) protein is Phosphopantetheine adenylyltransferase.